The chain runs to 218 residues: Probable 1-Cys peroxiredoxin (218 aa).

The Thioredoxin domain occupies 5–166; that stretch reads WALGDLVPDI…VLRVLDSLQL (162 aa). Cysteine 47 (cysteine sulfenic acid (-SOH) intermediate) is an active-site residue.

Belongs to the peroxiredoxin family. Prx6 subfamily.

It localises to the nucleus. The protein localises to the cytoplasm. It catalyses the reaction a hydroperoxide + [thioredoxin]-dithiol = an alcohol + [thioredoxin]-disulfide + H2O. Thiol-specific peroxidase that catalyzes the reduction of hydrogen peroxide and organic hydroperoxides to water and alcohols, respectively. Seems to contribute to the inhibition of germination during stress. Associated with the rehydration events involved in the recovery of the desiccation-tolerant moss. The protein is Probable 1-Cys peroxiredoxin of Syntrichia ruralis (Great hairy screw-moss).